Reading from the N-terminus, the 296-residue chain is Ribosomal RNA small subunit methyltransferase H (296 aa).

S-adenosyl-L-methionine is bound by residues 30–32 (GGH), Asp-49, Phe-76, Asp-97, and Gln-104.

Belongs to the methyltransferase superfamily. RsmH family.

The protein localises to the cytoplasm. The catalysed reaction is cytidine(1402) in 16S rRNA + S-adenosyl-L-methionine = N(4)-methylcytidine(1402) in 16S rRNA + S-adenosyl-L-homocysteine + H(+). Specifically methylates the N4 position of cytidine in position 1402 (C1402) of 16S rRNA. This Mesomycoplasma hyopneumoniae (strain 7448) (Mycoplasma hyopneumoniae) protein is Ribosomal RNA small subunit methyltransferase H.